We begin with the raw amino-acid sequence, 445 residues long: CBL-interacting serine/threonine-protein kinase 5 (445 aa).

Residues 12–267 enclose the Protein kinase domain; sequence YEMGRLLGKG…IPAIMRTPWL (256 aa). Residues 18–26 and K41 each bind ATP; that span reads LGKGTFAKV. The active-site Proton acceptor is the D135. An activation loop region spans residues 153 to 182; it reads DFGLSALPEQILQDGLLHTQCGTPAYVAPE. Position 157 is a phosphoserine (S157). Position 171 is a phosphothreonine (T171). An NAF domain is found at 307–332; the sequence is ISPKFFNAFEFISSMSSGFDLSSLFE. The tract at residues 336 to 366 is PPI; sequence KVQSVFTSRSSATEVMEKIETVTKEMNMKVK.

This sequence belongs to the protein kinase superfamily. CAMK Ser/Thr protein kinase family. SNF1 subfamily. Requires Mn(2+) as cofactor.

It carries out the reaction L-seryl-[protein] + ATP = O-phospho-L-seryl-[protein] + ADP + H(+). The catalysed reaction is L-threonyl-[protein] + ATP = O-phospho-L-threonyl-[protein] + ADP + H(+). Its function is as follows. CIPK serine-threonine protein kinases interact with CBL proteins. Binding of a CBL protein to the regulatory NAF domain of CIPK protein lead to the activation of the kinase in a calcium-dependent manner. This is CBL-interacting serine/threonine-protein kinase 5 (CIPK5) from Arabidopsis thaliana (Mouse-ear cress).